Consider the following 397-residue polypeptide: GDNF family receptor alpha-3 (397 aa).

Positions 1–28 (MGLSWSPRPPLLMILLLVLSLWLPLGAG) are cleaved as a signal peptide. A disulfide bond links cysteine 48 and cysteine 54. Residues asparagine 92 and asparagine 145 are each glycosylated (N-linked (GlcNAc...) asparagine). Disulfide bonds link cysteine 159–cysteine 215, cysteine 166–cysteine 172, cysteine 183–cysteine 193, cysteine 188–cysteine 236, cysteine 217–cysteine 224, cysteine 245–cysteine 313, cysteine 252–cysteine 258, cysteine 269–cysteine 285, cysteine 278–cysteine 337, and cysteine 315–cysteine 325. Asparagine 306 carries N-linked (GlcNAc...) asparagine glycosylation. Asparagine 371 carries GPI-anchor amidated asparagine lipidation. Residues 372–397 (PALRLQPRLPILSFSILPLILLQTLW) constitute a propeptide, removed in mature form.

It belongs to the GDNFR family. As to quaternary structure, interacts with ARTN ligand and RET: forms a 2:2:2 ternary complex composed of ARTN ligand, GFRA3 and RET receptor. Interacts with SORL1.

The protein localises to the cell membrane. In terms of biological role, receptor for artemin (ARTN), a growth factor that supports the survival of sensory and sympathetic peripheral neurons. ARTN-binding leads to autophosphorylation and activation of the RET receptor. The protein is GDNF family receptor alpha-3 (Gfra3) of Mus musculus (Mouse).